Reading from the N-terminus, the 697-residue chain is Potassium-transporting ATPase ATP-binding subunit (697 aa).

4 helical membrane passes run 55–75, 79–99, 245–265, and 271–291; these read PIMFVVEIGFIITFILSFLPS, SIPGWFNITVSLILLFTVLFA, LTLIFLIVVVTLPIFTNYLGF, and VLVALLVCLIPTTIGGLLSAI. D324 acts as the 4-aspartylphosphate intermediate in catalysis. ATP contacts are provided by residues D361, E365, 393-400, and K412; that span reads FKAETRMS. The Mg(2+) site is built by D535 and D539. 3 helical membrane passes run 605–625, 633–653, and 677–697; these read FAIIPAMFTLAIPQMEALNIM, AILSALIFNAVIIPLLIPLAM, and GGVIVPFIGIKVIDMIVGLFI.

It belongs to the cation transport ATPase (P-type) (TC 3.A.3) family. Type IA subfamily. In terms of assembly, the system is composed of three essential subunits: KdpA, KdpB and KdpC.

It localises to the cell membrane. The enzyme catalyses K(+)(out) + ATP + H2O = K(+)(in) + ADP + phosphate + H(+). Functionally, part of the high-affinity ATP-driven potassium transport (or Kdp) system, which catalyzes the hydrolysis of ATP coupled with the electrogenic transport of potassium into the cytoplasm. This subunit is responsible for energy coupling to the transport system and for the release of the potassium ions to the cytoplasm. The polypeptide is Potassium-transporting ATPase ATP-binding subunit (Bacillus cereus (strain B4264)).